The sequence spans 1239 residues: Inner tegument protein (1239 aa).

Positions 1–10 (MASAMESDSS) are enriched in low complexity. Disordered regions lie at residues 1-20 (MASA…DAQP), 672-708 (GESP…GGPW), and 1090-1239 (GRNA…AEDE). Residues 618 to 1239 (NELPKTRSLA…RPPRPTAEDE (622 aa)) are interaction with large tegument protein. The segment covering 1115–1126 (DSSPFSFSSSDF) has biased composition (low complexity). A compositionally biased stretch (acidic residues) spans 1127-1136 (SDQDEGEGGE). Over residues 1181–1190 (RTTPSPSRRA) the composition is skewed to low complexity. Positions 1219–1232 (VRPRTRRGATRRPP) are enriched in basic residues.

The protein belongs to the herpesviridae inner tegument protein family. In terms of assembly, interacts (via C-terminus) with the large tegument protein/LTP (via N-terminus).

It localises to the virion tegument. Its subcellular location is the host cytoplasm. It is found in the host nucleus. The protein localises to the host Golgi apparatus. The protein resides in the host trans-Golgi network. Plays an essential role in cytoplasmic secondary envelopment during viral egress. Interacts with the capsid via the large tegument protein/LTP and participates in its transport to the host trans-Golgi network (TGN) where secondary envelopment occurs. Modulates tegumentation and capsid accumulation at the viral assembly complex. This Homo sapiens (Human) protein is Inner tegument protein.